Consider the following 134-residue polypeptide: Small ribosomal subunit protein uS11 (134 aa).

The disordered stretch occupies residues 115–134 (VTPIPTDSTRRKGGRRGRRL). The segment covering 125–134 (RKGGRRGRRL) has biased composition (basic residues).

Belongs to the universal ribosomal protein uS11 family.

This chain is Small ribosomal subunit protein uS11 (RPS14), found in Syntrichia ruralis (Great hairy screw-moss).